A 472-amino-acid chain; its full sequence is ATP synthase subunit beta (472 aa).

150 to 157 (GGAGVGKT) serves as a coordination point for ATP.

This sequence belongs to the ATPase alpha/beta chains family. As to quaternary structure, F-type ATPases have 2 components, CF(1) - the catalytic core - and CF(0) - the membrane proton channel. CF(1) has five subunits: alpha(3), beta(3), gamma(1), delta(1), epsilon(1). CF(0) has four main subunits: a, b, b' and c.

It is found in the cellular chromatophore membrane. The enzyme catalyses ATP + H2O + 4 H(+)(in) = ADP + phosphate + 5 H(+)(out). Functionally, produces ATP from ADP in the presence of a proton gradient across the membrane. The catalytic sites are hosted primarily by the beta subunits. The sequence is that of ATP synthase subunit beta from Rhodobacter capsulatus (Rhodopseudomonas capsulata).